Here is a 124-residue protein sequence, read N- to C-terminus: Large ribosomal subunit protein bL12 (124 aa).

Residues 99–124 (KEGMNKEDAEKAKADLEAAGAKVELK) are disordered. Positions 101–114 (GMNKEDAEKAKADL) are enriched in basic and acidic residues. The segment covering 115 to 124 (EAAGAKVELK) has biased composition (low complexity).

Belongs to the bacterial ribosomal protein bL12 family. As to quaternary structure, homodimer. Part of the ribosomal stalk of the 50S ribosomal subunit. Forms a multimeric L10(L12)X complex, where L10 forms an elongated spine to which 2 to 4 L12 dimers bind in a sequential fashion. Binds GTP-bound translation factors.

In terms of biological role, forms part of the ribosomal stalk which helps the ribosome interact with GTP-bound translation factors. Is thus essential for accurate translation. In Campylobacter hominis (strain ATCC BAA-381 / DSM 21671 / CCUG 45161 / LMG 19568 / NCTC 13146 / CH001A), this protein is Large ribosomal subunit protein bL12.